A 454-amino-acid polypeptide reads, in one-letter code: UDP-N-acetylmuramoylalanine--D-glutamate ligase (454 aa).

Glycine 117–threonine 123 contacts ATP.

The protein belongs to the MurCDEF family.

The protein resides in the cytoplasm. The enzyme catalyses UDP-N-acetyl-alpha-D-muramoyl-L-alanine + D-glutamate + ATP = UDP-N-acetyl-alpha-D-muramoyl-L-alanyl-D-glutamate + ADP + phosphate + H(+). The protein operates within cell wall biogenesis; peptidoglycan biosynthesis. Its function is as follows. Cell wall formation. Catalyzes the addition of glutamate to the nucleotide precursor UDP-N-acetylmuramoyl-L-alanine (UMA). The protein is UDP-N-acetylmuramoylalanine--D-glutamate ligase of Alkaliphilus oremlandii (strain OhILAs) (Clostridium oremlandii (strain OhILAs)).